The primary structure comprises 387 residues: MKNVVIVDCLRTPMGRSKGGAFRHTRAEDLSAHLMKGILARNPQVNPSEIEDIYWGCVQQTLEQGFNVARNAALLAGLPIEIGAVTVNRLCGSSMQALHDGARAIMTGDAEICLIGGVEHMGHVPMNHGVDFHPGMSKHVAKAAGMMGLTAEMLGKLHGISREQQDEFAARSHARAHAATMEGRFKNEILPTEGHAADGTLFTLDHDEVIRPETTVEGLSQLRPVFDPANGTVTAGTSSALSDGASAMLIMSEEKANELGVTIRARIKGMAIAGCDPSIMGYGPVPATQKALKRAGLSIEDMDVIELNEAFAAQSLPCAKDLGLLDVMDEKVNLNGGAIALGHPLGCSGARISTTLINLMEAKDAKYGLATMCIGLGQGIATVFERP.

Cys91 serves as the catalytic Acyl-thioester intermediate. Active-site proton acceptor residues include His343 and Cys373.

This sequence belongs to the thiolase-like superfamily. Thiolase family. In terms of assembly, heterotetramer of two alpha chains (FadB) and two beta chains (FadA).

The protein localises to the cytoplasm. It carries out the reaction an acyl-CoA + acetyl-CoA = a 3-oxoacyl-CoA + CoA. It participates in lipid metabolism; fatty acid beta-oxidation. Its function is as follows. Catalyzes the final step of fatty acid oxidation in which acetyl-CoA is released and the CoA ester of a fatty acid two carbons shorter is formed. This Vibrio vulnificus (strain CMCP6) protein is 3-ketoacyl-CoA thiolase.